Consider the following 623-residue polypeptide: Membralin-like protein At1g60995 (623 aa).

Residues 24 to 44 (GFLEYTYLFVAITLFCILVVM) traverse the membrane as a helical segment. Residues 99-119 (SLEVSKTDQESSTSEENTDDT) form a disordered region. Transmembrane regions (helical) follow at residues 315–335 (GVLM…SFTL), 363–383 (IFVH…ILFF), 392–412 (LLAF…LISV), and 424–444 (FFLL…YGFS). 2 disordered regions span residues 506 to 567 (NRTT…QAGA) and 602 to 623 (EAQV…LSVD). Polar residues predominate over residues 514 to 531 (PSGPNHTTPNQNTETRSF).

It belongs to the membralin family.

The protein resides in the membrane. The protein is Membralin-like protein At1g60995 of Arabidopsis thaliana (Mouse-ear cress).